The following is a 182-amino-acid chain: Auxin-responsive protein IAA9 (182 aa).

Residues 1–41 are disordered; it reads MELELGLAPPNSGHLVVDELSSSSSSGGGSGSAPVSASSAG. The EAR-like (transcriptional repression) motif lies at 3 to 7; sequence LELGL. Residues 32–41 are compositionally biased toward low complexity; sequence SAPVSASSAG. The PB1 domain maps to 92–182; sequence ANYVKVKKEG…RSVKRLKILG (91 aa).

This sequence belongs to the Aux/IAA family. In terms of assembly, homodimers and heterodimers. Expressed in etiolated shoots and flowers.

It is found in the nucleus. Aux/IAA proteins are short-lived transcriptional factors that function as repressors of early auxin response genes at low auxin concentrations. The protein is Auxin-responsive protein IAA9 (IAA9) of Oryza sativa subsp. japonica (Rice).